The chain runs to 349 residues: tRNA pseudouridine synthase D (349 aa).

Position 27 (Phe-27) interacts with substrate. Asp-80 (nucleophile) is an active-site residue. Asn-129 contacts substrate. The TRUD domain maps to 155 to 303 (GVPNYFGAQR…VEAARRAMLL (149 aa)). Phe-329 is a binding site for substrate.

It belongs to the pseudouridine synthase TruD family.

The enzyme catalyses uridine(13) in tRNA = pseudouridine(13) in tRNA. Responsible for synthesis of pseudouridine from uracil-13 in transfer RNAs. The polypeptide is tRNA pseudouridine synthase D (Escherichia coli O81 (strain ED1a)).